The primary structure comprises 142 residues: Small ribosomal subunit protein bS18m (142 aa).

Belongs to the bacterial ribosomal protein bS18 family. Component of the mitochondrial small ribosomal subunit (mt-SSU). Mature mammalian 55S mitochondrial ribosomes consist of a small (28S) and a large (39S) subunit. The 28S small subunit contains a 12S ribosomal RNA (12S mt-rRNA) and 30 different proteins. The 39S large subunit contains a 16S rRNA (16S mt-rRNA), a copy of mitochondrial valine transfer RNA (mt-tRNA(Val)), which plays an integral structural role, and 52 different proteins. bS18m has a zinc binding site.

Its subcellular location is the mitochondrion. The sequence is that of Small ribosomal subunit protein bS18m (MRPS18C) from Homo sapiens (Human).